Reading from the N-terminus, the 267-residue chain is 4-hydroxy-tetrahydrodipicolinate reductase (267 aa).

Residues 8–13 and Asp34 contribute to the NAD(+) site; that span reads GAAGRM. NADP(+) is bound at residue Arg35. NAD(+) is bound by residues 98 to 100 and 122 to 125; these read GTT and AANF. The active-site Proton donor/acceptor is the His155. His156 contacts (S)-2,3,4,5-tetrahydrodipicolinate. Lys159 functions as the Proton donor in the catalytic mechanism. (S)-2,3,4,5-tetrahydrodipicolinate is bound at residue 165 to 166; the sequence is GT.

The protein belongs to the DapB family.

It is found in the cytoplasm. The enzyme catalyses (S)-2,3,4,5-tetrahydrodipicolinate + NAD(+) + H2O = (2S,4S)-4-hydroxy-2,3,4,5-tetrahydrodipicolinate + NADH + H(+). The catalysed reaction is (S)-2,3,4,5-tetrahydrodipicolinate + NADP(+) + H2O = (2S,4S)-4-hydroxy-2,3,4,5-tetrahydrodipicolinate + NADPH + H(+). It functions in the pathway amino-acid biosynthesis; L-lysine biosynthesis via DAP pathway; (S)-tetrahydrodipicolinate from L-aspartate: step 4/4. Functionally, catalyzes the conversion of 4-hydroxy-tetrahydrodipicolinate (HTPA) to tetrahydrodipicolinate. The chain is 4-hydroxy-tetrahydrodipicolinate reductase from Pseudomonas amygdali pv. tabaci (Pseudomonas syringae pv. tabaci).